The primary structure comprises 35 residues: Sperm-specific protein Phi-1 (35 aa).

2 stretches are compositionally biased toward basic residues: residues 1–17 and 25–35; these read PSPT…RSRS and AAKRAKSKTAK. Residues 1-35 are disordered; it reads PSPTRRSKSRSKSRSRSRSASAGKAAKRAKSKTAK.

In terms of tissue distribution, sperm.

The protein localises to the nucleus. Its subcellular location is the chromosome. Its function is as follows. Involved in nuclear basic protein transition: histones are replaced by spermatid specific proteins which are themselves replaced by protamines in late spermatids. This is Sperm-specific protein Phi-1 from Mytilus californianus (California mussel).